Consider the following 229-residue polypeptide: Adenosylcobinamide-GDP ribazoletransferase (229 aa).

The next 6 helical transmembrane spans lie at alanine 31–alanine 51, alanine 55–serine 75, alanine 111–leucine 131, proline 134–threonine 154, valine 176–valine 196, and glycine 208–alanine 228.

It belongs to the CobS family. It depends on Mg(2+) as a cofactor.

It is found in the cell membrane. The enzyme catalyses alpha-ribazole + adenosylcob(III)inamide-GDP = adenosylcob(III)alamin + GMP + H(+). The catalysed reaction is alpha-ribazole 5'-phosphate + adenosylcob(III)inamide-GDP = adenosylcob(III)alamin 5'-phosphate + GMP + H(+). It participates in cofactor biosynthesis; adenosylcobalamin biosynthesis; adenosylcobalamin from cob(II)yrinate a,c-diamide: step 7/7. Joins adenosylcobinamide-GDP and alpha-ribazole to generate adenosylcobalamin (Ado-cobalamin). Also synthesizes adenosylcobalamin 5'-phosphate from adenosylcobinamide-GDP and alpha-ribazole 5'-phosphate. The polypeptide is Adenosylcobinamide-GDP ribazoletransferase (Nocardioides sp. (strain ATCC BAA-499 / JS614)).